The chain runs to 323 residues: Aspartate carbamoyltransferase catalytic subunit (323 aa).

Arginine 55 and threonine 56 together coordinate carbamoyl phosphate. Lysine 83 serves as a coordination point for L-aspartate. 3 residues coordinate carbamoyl phosphate: arginine 105, histidine 133, and glutamine 136. Positions 166 and 220 each coordinate L-aspartate. Glycine 261 and proline 262 together coordinate carbamoyl phosphate.

The protein belongs to the aspartate/ornithine carbamoyltransferase superfamily. ATCase family. As to quaternary structure, heterododecamer (2C3:3R2) of six catalytic PyrB chains organized as two trimers (C3), and six regulatory PyrI chains organized as three dimers (R2).

The catalysed reaction is carbamoyl phosphate + L-aspartate = N-carbamoyl-L-aspartate + phosphate + H(+). Its pathway is pyrimidine metabolism; UMP biosynthesis via de novo pathway; (S)-dihydroorotate from bicarbonate: step 2/3. Catalyzes the condensation of carbamoyl phosphate and aspartate to form carbamoyl aspartate and inorganic phosphate, the committed step in the de novo pyrimidine nucleotide biosynthesis pathway. In Acidothermus cellulolyticus (strain ATCC 43068 / DSM 8971 / 11B), this protein is Aspartate carbamoyltransferase catalytic subunit.